Here is a 512-residue protein sequence, read N- to C-terminus: Respiratory nitrate reductase 1 beta chain (512 aa).

3 4Fe-4S ferredoxin-type domains span residues 7 to 35 (VGMV…SREG), 175 to 206 (TFMM…KREE), and 208 to 237 (GIVL…FNWK). 7 residues coordinate [4Fe-4S] cluster: Cys16, Cys19, Cys22, Cys26, Cys184, Cys187, and Cys192. The [3Fe-4S] cluster site is built by Cys196, Cys217, and Cys223. [4Fe-4S] cluster is bound by residues Cys227, Cys244, Cys247, Cys259, and Cys263.

In terms of assembly, dimer of heterotrimers each composed of an alpha, a beta and a gamma chain. Alpha and beta are catalytic chains; gamma chains are involved in binding the enzyme complex to the cytoplasmic membrane. Requires [4Fe-4S] cluster as cofactor. The cofactor is [3Fe-4S] cluster.

The protein resides in the cell membrane. The enzyme catalyses nitrate + a quinol = a quinone + nitrite + H2O. Functionally, the nitrate reductase enzyme complex allows E.coli to use nitrate as an electron acceptor during anaerobic growth. The beta chain is an electron transfer unit containing four cysteine clusters involved in the formation of iron-sulfur centers. Electrons are transferred from the gamma chain to the molybdenum cofactor of the alpha subunit. The chain is Respiratory nitrate reductase 1 beta chain (narH) from Escherichia coli (strain K12).